Consider the following 373-residue polypeptide: Acyl-CoA dehydrogenase FadE27 (373 aa).

3 residues coordinate FAD: Arg-251, His-327, and Gly-331.

This sequence belongs to the acyl-CoA dehydrogenase family. Heterotetramer (dimer of heterodimers) composed of FadE26 and FadE27. Requires FAD as cofactor.

It carries out the reaction (25S)-3-oxocholest-4-en-26-oyl-CoA + A = 3-oxo-cholest-4,24-dien-26-oyl-CoA + AH2. It functions in the pathway steroid metabolism; cholesterol degradation. Uncompetitively inhibited by high concentration of 3-OCS-CoA. In terms of biological role, involved in the first cycle of side chain dehydrogenation in the beta-oxidation of cholesterol catabolism. It contributes partly to the virulence by increasing the efficiency of beta-oxidation. Catalyzes the dehydrogenation of acyl-CoA ester side chains of (25S)-3-oxo-cholest-4-en-26-oyl-CoA (3-OCS-CoA) to yield (24E)-3-oxo-cholest-4,24-dien-26-oyl-CoA. Also able to dehydrogenate steroyl-CoA such as 3-oxo-chol-4-en-24-oyl-CoA (3-OCO-CoA) as well as 3-oxo-4-pregnene-20-carboxyl-CoA (3-OPC-CoA). It dehydrogenates only (25S)-OCS-CoA diastereomer. This Mycobacterium tuberculosis (strain ATCC 25618 / H37Rv) protein is Acyl-CoA dehydrogenase FadE27 (fadE27).